The following is a 437-amino-acid chain: Aspartic proteinase CDR1 (437 aa).

The signal sequence occupies residues 1-25 (MASLFSSVLLSLCLLSSLFLSNANA). Residues 26-73 (KPKLGFTADLIHRDSPKSPFYNPMETSSQRLRNAIHRSVNRVFHFTEK) constitute a propeptide, activation peptide. The Peptidase A1 domain maps to 90–430 (YLMNVSIGTP…DTVSKTVSFK (341 aa)). An N-linked (GlcNAc...) asparagine glycan is attached at asparagine 93. Catalysis depends on residues aspartate 108 and aspartate 319.

The protein belongs to the peptidase A1 family.

It is found in the secreted. It localises to the extracellular space. The protein resides in the apoplast. Its function is as follows. Involved in salicylic acid-dependent inducible resistance responses. May release an endogenous peptide elicitor required for the activation of inducible resistance mechanisms. Possesses protease activity in vitro. In Arabidopsis thaliana (Mouse-ear cress), this protein is Aspartic proteinase CDR1 (CDR1).